A 241-amino-acid polypeptide reads, in one-letter code: Beta-nerve growth factor (241 aa).

An N-terminal signal peptide occupies residues 1–18 (MSMLFYTLITALLIGIQA). Residues 19–121 (APHTESNVPA…SFNRTHRSKR (103 aa)) constitute a propeptide that is removed on maturation. 3 cysteine pairs are disulfide-bonded: Cys-136–Cys-201, Cys-179–Cys-229, and Cys-189–Cys-231. An N-linked (GlcNAc...) asparagine glycan is attached at Asn-166. Residues Tyr-173 and Lys-209 each coordinate a 1-acyl-sn-glycero-3-phospho-(1D-myo-inositol). A 1-acyl-sn-glycero-3-phospho-L-serine is bound at residue Lys-209.

This sequence belongs to the NGF-beta family. Homodimer. The homodimer interacts with a single NTRK1 chain. The homodimer interacts with a single NGFR chain. The NGF dimer interacts with a single SORCS2 chain (via extracellular domain). The NGF precursor (proNGF) binds to a receptor complex formed by SORT1 and NGFR, which leads to NGF endocytosis. Both mature NGF and the immature NGF precursor (proNGF) interact with SORCS2 and with the heterodimer formed by SORCS2 and NGFR (via extracellular domains). The NGF precursor (proNGF) has much higher affinity for SORCS2 than mature NGF. The NGF precursor (proNGF) has much higher affinity for SORT1 than mature NGF. Interacts with ADAM10 in a divalent cation-dependent manner. Interacts with SORCS3.

It localises to the secreted. It is found in the endosome lumen. Functionally, nerve growth factor is important for the development and maintenance of the sympathetic and sensory nervous systems. Extracellular ligand for the NTRK1 and NGFR receptors, activates cellular signaling cascades to regulate neuronal proliferation, differentiation and survival. The immature NGF precursor (proNGF) functions as a ligand for the heterodimeric receptor formed by SORCS2 and NGFR, and activates cellular signaling cascades that lead to inactivation of RAC1 and/or RAC2, reorganization of the actin cytoskeleton and neuronal growth cone collapse. In contrast to mature NGF, the precursor form (proNGF) promotes neuronal apoptosis (in vitro). Inhibits metalloproteinase-dependent proteolysis of platelet glycoprotein VI. Binds lysophosphatidylinositol and lysophosphatidylserine between the two chains of the homodimer. The lipid-bound form promotes histamine relase from mast cells, contrary to the lipid-free form. This chain is Beta-nerve growth factor (NGF), found in Bos taurus (Bovine).